The sequence spans 273 residues: L-cysteine S-thiosulfotransferase subunit SoxA (273 aa).

An N-terminal signal peptide occupies residues 1 to 24; it reads MKKTVTAVALLCALSSTAIAPTFA. Cysteines 74 and 110 form a disulfide. The Cytochrome c domain maps to 162-273; sequence EMYELGKRMF…GVMLTPGIKR (112 aa). Heme contacts are provided by cysteine 182 and histidine 186. Residue arginine 230 participates in substrate binding. Cysteine 234 provides a ligand contact to heme. The Cysteine persulfide intermediate role is filled by cysteine 234.

This sequence belongs to the SoxA family. As to quaternary structure, heterodimer of SoxA and SoxX. Requires heme as cofactor. Post-translationally, cysteine persulfide at Cys-234.

The protein resides in the periplasm. The enzyme catalyses L-cysteinyl-[SoxY protein] + thiosulfate + 2 Fe(III)-[cytochrome c] = S-sulfosulfanyl-L-cysteinyl-[SoxY protein] + 2 Fe(II)-[cytochrome c] + 2 H(+). It carries out the reaction S-sulfanyl-L-cysteinyl-[SoxY protein] + thiosulfate + 2 Fe(III)-[cytochrome c] = S-(2-sulfodisulfanyl)-L-cysteinyl-[SoxY protein] + 2 Fe(II)-[cytochrome c] + 2 H(+). Functionally, C-type monoheme cytochrome, which is part of the SoxAX cytochrome complex involved in sulfur oxidation. The SoxAX complex catalyzes the formation of a heterodisulfide bond between the conserved cysteine residue on a sulfur carrier SoxYZ complex subunit SoxY and thiosulfate or other inorganic sulfur substrates. This leads to the liberation of two electrons, which may be transferred from the SoxAX complex to another cytochrome c that then channels them into the respiratory electron transport chain. Some electrons may be used for reductive CO(2) fixation. This is L-cysteine S-thiosulfotransferase subunit SoxA from Hydrogenophilus thermoluteolus (Pseudomonas hydrogenothermophila).